The sequence spans 465 residues: Box C/D snoRNA protein 1 (465 aa).

Residues 1-72 (MEFAAENEGK…GSRQRPEEIP (72 aa)) form a disordered region. The residue at position 25 (Ser25) is a Phosphoserine. Residues 56–70 (EIGDGEEGSRQRPEE) are compositionally biased toward basic and acidic residues. Glycyl lysine isopeptide (Lys-Gly) (interchain with G-Cter in SUMO2) cross-links involve residues Lys79, Lys108, Lys118, Lys138, Lys148, Lys157, Lys168, Lys178, and Lys195. Positions 215, 218, 227, 230, 235, 239, 243, and 249 each coordinate Zn(2+). The segment at 215-249 (CETCGTEEAKYRCPRCMRYSCSLPCVKKHKAELTC) adopts an HIT-type zinc-finger fold. Lys454 participates in a covalent cross-link: Glycyl lysine isopeptide (Lys-Gly) (interchain with G-Cter in SUMO2).

It belongs to the BCD1 family. As to quaternary structure, interacts with FBL, SNU13, NOP58, NUFIP1, RUVBL1, RUVBL2 and TAF9. Interacts (via HIT-type zinc finger) with the RUVBL1/RUVBL2 complex in the presence of ADP.

Required for box C/D snoRNAs accumulation involved in snoRNA processing, snoRNA transport to the nucleolus and ribosome biogenesis. The protein is Box C/D snoRNA protein 1 (ZNHIT6) of Pongo abelii (Sumatran orangutan).